The following is a 429-amino-acid chain: Adenylosuccinate synthetase (429 aa).

GTP-binding positions include 13–19 and 41–43; these read GDEGKGK and GHT. Catalysis depends on D14, which acts as the Proton acceptor. Mg(2+) contacts are provided by D14 and G41. Residues 14-17, 39-42, T130, R144, Q224, T239, and R303 each bind IMP; these read DEGK and NAGH. H42 functions as the Proton donor in the catalytic mechanism. 299–305 contributes to the substrate binding site; sequence ATTGRAR. Residues R305, 331 to 333, and 412 to 414 contribute to the GTP site; these read KLD and STG.

Belongs to the adenylosuccinate synthetase family. In terms of assembly, homodimer. Requires Mg(2+) as cofactor.

The protein resides in the cytoplasm. The catalysed reaction is IMP + L-aspartate + GTP = N(6)-(1,2-dicarboxyethyl)-AMP + GDP + phosphate + 2 H(+). It functions in the pathway purine metabolism; AMP biosynthesis via de novo pathway; AMP from IMP: step 1/2. Functionally, plays an important role in the de novo pathway of purine nucleotide biosynthesis. Catalyzes the first committed step in the biosynthesis of AMP from IMP. The sequence is that of Adenylosuccinate synthetase from Psychrobacter sp. (strain PRwf-1).